The sequence spans 56 residues: Large ribosomal subunit protein bL32 (56 aa).

The segment at 1–28 (MAVQQNRKTRSKRGMRRSHDALTTAALS) is disordered. Residues 7 to 16 (RKTRSKRGMR) are compositionally biased toward basic residues.

The protein belongs to the bacterial ribosomal protein bL32 family.

This is Large ribosomal subunit protein bL32 from Vibrio vulnificus (strain CMCP6).